A 508-amino-acid polypeptide reads, in one-letter code: Octopamine receptor beta-1R (508 aa).

Over 1 to 111 (MTLLQRLQAM…SHLALVFVKC (111 aa)) the chain is Extracellular. A helical membrane pass occupies residues 112 to 132 (FIIGFIILAAILGNMLVIVSV). The Cytoplasmic portion of the chain corresponds to 133 to 139 (MRHRKLR). The helical transmembrane segment at 140–160 (IITNYFVVSLAVADMLVALCA) threads the bilayer. Topologically, residues 161–186 (MTFNASVMISGKWMFGSVMCDMWNSF) are extracellular. N164 carries an N-linked (GlcNAc...) asparagine glycan. The helical transmembrane segment at 187–209 (DVYFSTASIMHLCCISVDRYYAI) threads the bilayer. Residues 210–223 (VQPLDYPLIMTQRR) lie on the Cytoplasmic side of the membrane. Residues 224–244 (VFIMLLMVWLSPALLSFLPIC) form a helical membrane-spanning segment. The Extracellular segment spans residues 245–270 (SGWYTTTENYKYLKSNPHICEFKVNK). A helical transmembrane segment spans residues 271 to 291 (AYAIVSSSMSFWIPGIVMLSM). At 292–351 (YYRIYQEADRQERLVYRSKVAALLLEKHLQISQIPKPRPSIQVEQSTISTMRRERKAART) the chain is on the cytoplasmic side. A helical transmembrane segment spans residues 352-372 (LGIIMSAFLICWLPFFLWYIV). Residues 373 to 383 (SSLCDSCITPR) lie on the Extracellular side of the membrane. Residues 384 to 404 (LLVGILFWIGYFNSALNPIIY) form a helical membrane-spanning segment. Residues 405-508 (AYFNRDFRAA…MQQLHPLYTN (104 aa)) are Cytoplasmic-facing. Residues 440–464 (RDLEFGGPSRRGTNGAQRTGSGSAE) form a disordered region. Residues 450 to 461 (RGTNGAQRTGSG) are compositionally biased toward polar residues.

This sequence belongs to the G-protein coupled receptor 1 family. In terms of tissue distribution, in the adult, expressed in the superior protocerebrum and the optic lobe medulla of the central nervous system, nurse cells of egg chambers in the ovary at oogenic stages 1-10, and spermatogonia and spermatocytes in the testis. Expressed in embryonic and larval ventral nerve cord and brain lobe, and the larval imaginal disk and larval salivary gland. Also expressed in larval synaptic boutons and retinal cells in the optic disk.

It is found in the cell membrane. Autoreceptor for octopamine, which is a neurotransmitter, neurohormone, and neuromodulator in invertebrates. Negatively regulates synaptic growth by activating the inhibitory G protein Galphao and limiting cAMP production. Antagonizes the action of Octbeta2R which stimulates synaptic growth. This is Octopamine receptor beta-1R from Drosophila melanogaster (Fruit fly).